The primary structure comprises 514 residues: H/ACA ribonucleoprotein complex subunit DKC1 (514 aa).

Residue Ala2 is modified to N-acetylalanine. The interval 2–21 is nucleolar localization; that stretch reads ADAEVIILPKKHKKKKERKS. A Glycyl lysine isopeptide (Lys-Gly) (interchain with G-Cter in SUMO2) cross-link involves residue Lys20. Ser21 is subject to Phosphoserine. Residues Lys39 and Lys43 each participate in a glycyl lysine isopeptide (Lys-Gly) (interchain with G-Cter in SUMO2) cross-link. Asp125 serves as the catalytic Nucleophile. Lys191 participates in a covalent cross-link: Glycyl lysine isopeptide (Lys-Gly) (interchain with G-Cter in SUMO2). One can recognise a PUA domain in the interval 296–371; sequence HKRLVMKDSA…IVAKIKRVIM (76 aa). At Ser387 the chain carries Phosphoserine. Lys394 participates in a covalent cross-link: Glycyl lysine isopeptide (Lys-Gly) (interchain with G-Cter in SUMO2). Lys413 is covalently cross-linked (Glycyl lysine isopeptide (Lys-Gly) (interchain with G-Cter in SUMO1); alternate). Residue Lys413 forms a Glycyl lysine isopeptide (Lys-Gly) (interchain with G-Cter in SUMO2); alternate linkage. Glycyl lysine isopeptide (Lys-Gly) (interchain with G-Cter in SUMO2) cross-links involve residues Lys424 and Lys433. The tract at residues 443–514 is disordered; sequence KTAKRKRESE…KAKEVELVSE (72 aa). The tract at residues 446–514 is nuclear and nucleolar localization; it reads KRKRESESES…KAKEVELVSE (69 aa). Phosphoserine is present on residues Ser451, Ser453, and Ser455. Thr458 bears the Phosphothreonine mark. Residue Lys467 forms a Glycyl lysine isopeptide (Lys-Gly) (interchain with G-Cter in SUMO2) linkage. Over residues 468 to 480 the composition is skewed to basic residues; that stretch reads KEKKKSKKDKKAK. Phosphoserine occurs at positions 485, 494, and 513.

This sequence belongs to the pseudouridine synthase TruB family. In terms of assembly, part of the H/ACA small nucleolar ribonucleoprotein (H/ACA snoRNP) complex, which contains NHP2/NOLA2, GAR1/NOLA1, NOP10/NOLA3, and DKC1/NOLA4, which is presumed to be the catalytic subunit. The complex contains a stable core formed by binding of one or two NOP10-DKC1 heterodimers to NHP2; GAR1 subsequently binds to this core via DKC1. The complex binds a box H/ACA small nucleolar RNA (snoRNA), which may target the specific site of modification within the RNA substrate. During assembly, the complex contains NAF1 instead of GAR1/NOLA1. The complex also interacts with TERC, which contains a 3'-terminal domain related to the box H/ACA snoRNAs. Specific interactions with snoRNAs or TERC are mediated by GAR1 and NHP2. Associates with NOLC1/NOPP140. H/ACA snoRNPs interact with the SMN complex, consisting of SMN1 or SMN2, GEMIN2/SIP1, DDX20/GEMIN3, and GEMIN4. This is mediated by interaction between GAR1 and SMN1 or SMN2. The SMN complex may be required for correct assembly of the H/ACA snoRNP complex. Component of the telomerase holoenzyme complex composed of one molecule of TERT, one molecule of WRAP53/TCAB1, two molecules of H/ACA ribonucleoprotein complex subunits DKC1, NOP10, NHP2 and GAR1, and a telomerase RNA template component (TERC). The telomerase holoenzyme complex is associated with TEP1, SMG6/EST1A and POT1. Interacts with SHQ1; this interaction may lead to the stabilization of DKC1, from the time of its synthesis until its association with NOP10, NHP2, and NAF1 at the nascent H/ACA RNA. Interacts with HMBOX1. Interacts with DHX36. As to expression, ubiquitously expressed.

The protein localises to the nucleus. It localises to the nucleolus. The protein resides in the cajal body. It is found in the cytoplasm. It catalyses the reaction uridine in 5S rRNA = pseudouridine in 5S rRNA. In terms of biological role, catalytic subunit of H/ACA small nucleolar ribonucleoprotein (H/ACA snoRNP) complex, which catalyzes pseudouridylation of rRNA. This involves the isomerization of uridine such that the ribose is subsequently attached to C5, instead of the normal N1. Each rRNA can contain up to 100 pseudouridine ('psi') residues, which may serve to stabilize the conformation of rRNAs. Required for ribosome biogenesis and telomere maintenance. Also required for correct processing or intranuclear trafficking of TERC, the RNA component of the telomerase reverse transcriptase (TERT) holoenzyme. Functionally, promotes cell to cell and cell to substratum adhesion, increases the cell proliferation rate and leads to cytokeratin hyper-expression. This chain is H/ACA ribonucleoprotein complex subunit DKC1, found in Homo sapiens (Human).